Consider the following 601-residue polypeptide: Elongation factor 4 (601 aa).

Positions 7–189 (KHTRNFSIVA…AIVEKVPVPD (183 aa)) constitute a tr-type G domain. GTP is bound by residues 19–24 (DHGKST) and 136–139 (NKID).

It belongs to the TRAFAC class translation factor GTPase superfamily. Classic translation factor GTPase family. LepA subfamily.

It localises to the cell membrane. It catalyses the reaction GTP + H2O = GDP + phosphate + H(+). Its function is as follows. Required for accurate and efficient protein synthesis under certain stress conditions. May act as a fidelity factor of the translation reaction, by catalyzing a one-codon backward translocation of tRNAs on improperly translocated ribosomes. Back-translocation proceeds from a post-translocation (POST) complex to a pre-translocation (PRE) complex, thus giving elongation factor G a second chance to translocate the tRNAs correctly. Binds to ribosomes in a GTP-dependent manner. This chain is Elongation factor 4, found in Clostridium novyi (strain NT).